A 219-amino-acid polypeptide reads, in one-letter code: Probable nicotinate-nucleotide adenylyltransferase (219 aa).

Belongs to the NadD family.

It catalyses the reaction nicotinate beta-D-ribonucleotide + ATP + H(+) = deamido-NAD(+) + diphosphate. It participates in cofactor biosynthesis; NAD(+) biosynthesis; deamido-NAD(+) from nicotinate D-ribonucleotide: step 1/1. Functionally, catalyzes the reversible adenylation of nicotinate mononucleotide (NaMN) to nicotinic acid adenine dinucleotide (NaAD). The sequence is that of Probable nicotinate-nucleotide adenylyltransferase from Pseudomonas entomophila (strain L48).